The following is a 445-amino-acid chain: Proline--tRNA ligase (445 aa).

Belongs to the class-II aminoacyl-tRNA synthetase family. ProS type 2 subfamily. In terms of assembly, homodimer.

It localises to the cytoplasm. It catalyses the reaction tRNA(Pro) + L-proline + ATP = L-prolyl-tRNA(Pro) + AMP + diphosphate. Its function is as follows. Catalyzes the attachment of proline to tRNA(Pro) in a two-step reaction: proline is first activated by ATP to form Pro-AMP and then transferred to the acceptor end of tRNA(Pro). The protein is Proline--tRNA ligase of Caulobacter sp. (strain K31).